Consider the following 1024-residue polypeptide: Multidrug resistance protein MdtC (1024 aa).

12 helical membrane-spanning segments follow: residues 12–32, 333–353, 360–380, 387–407, 435–455, 469–489, 528–548, 853–873, 875–895, 897–917, 953–973, and 984–1004; these read VATT…FSLL, EVER…FIFL, LIPA…MYLC, LSLM…IVVL, VLSM…MAGL, VAIG…CAWL, WVMV…ISIP, LWLI…LYES, VHPL…LLAL, LFDA…IGIV, PIIM…LSSG, and ITIV…TPVI.

It belongs to the resistance-nodulation-cell division (RND) (TC 2.A.6) family. MdtC subfamily. As to quaternary structure, part of a tripartite efflux system composed of MdtA, MdtB and MdtC. MdtC forms a heteromultimer with MdtB.

The protein localises to the cell inner membrane. The polypeptide is Multidrug resistance protein MdtC (Yersinia pseudotuberculosis serotype O:1b (strain IP 31758)).